The sequence spans 305 residues: Heme A synthase (305 aa).

Residues 1-6 (MKKFLK) lie on the Cytoplasmic side of the membrane. The helical transmembrane segment at 7-27 (VWSVLTIICMTVVVFGGALVT) threads the bilayer. Residues 28 to 63 (KTGSADGCGNSWPLCNGQLVRLTDVTPEKLIEFMHR) are Extracellular-facing. A disulfide bridge links Cys35 with Cys42. Glu59 is a catalytic residue. His62 is a heme o binding site. A helical membrane pass occupies residues 64 to 84 (MTTGISSIFVIVLAICAWIYM). Over 85-92 (KNRRETKP) the chain is Cytoplasmic. A helical membrane pass occupies residues 93–113 (LAIIAVLFLIIQALMGMAAVV). At 114–122 (WGQNPYIMA) the chain is on the extracellular side. A helical transmembrane segment spans residues 123 to 143 (LHFGISIICYASIVLLALMIF). A heme o-binding site is contributed by His124. The Cytoplasmic portion of the chain corresponds to 144–160 (EVDRKFDARNLVMGTKL). The helical transmembrane segment at 161–181 (RINIYALTIYTYLAVYTGALV) threads the bilayer. Over 182 to 212 (RHEKASMAVPVWPFENGKFIMPDSVQDYVQY) the chain is Extracellular. Residues 213–233 (FHRVAAFILIVWLLYVTWLVF) form a helical membrane-spanning segment. His214 contributes to the heme b binding site. At 234–240 (RDYRRYR) the chain is on the cytoplasmic side. Residues 241 to 261 (VLTFSMVLSLLFIALQAVTGA) form a helical membrane-spanning segment. The Extracellular portion of the chain corresponds to 262-271 (LSVYTGVNLY). Residues 272 to 292 (IALAHSLIITMLFALLCYLCL) form a helical membrane-spanning segment. Residue His276 participates in heme b binding. Residues 293 to 305 (LASRSKSNRLRIK) lie on the Cytoplasmic side of the membrane.

It belongs to the COX15/CtaA family. Type 1 subfamily. As to quaternary structure, interacts with CtaB. Requires heme b as cofactor.

The protein resides in the cell membrane. The catalysed reaction is Fe(II)-heme o + 2 A + H2O = Fe(II)-heme a + 2 AH2. The protein operates within porphyrin-containing compound metabolism; heme A biosynthesis; heme A from heme O: step 1/1. Functionally, catalyzes the conversion of heme O to heme A by two successive hydroxylations of the methyl group at C8. The first hydroxylation forms heme I, the second hydroxylation results in an unstable dihydroxymethyl group, which spontaneously dehydrates, resulting in the formyl group of heme A. The sequence is that of Heme A synthase from Listeria welshimeri serovar 6b (strain ATCC 35897 / DSM 20650 / CCUG 15529 / CIP 8149 / NCTC 11857 / SLCC 5334 / V8).